Reading from the N-terminus, the 416-residue chain is Ribulose bisphosphate carboxylase large chain (416 aa).

The substrate site is built by N102 and T152. K154 serves as the catalytic Proton acceptor. K156 lines the substrate pocket. Positions 180, 182, and 183 each coordinate Mg(2+). K180 bears the N6-carboxylysine mark. The active-site Proton acceptor is H273. Residues R274, H306, and S358 each contribute to the substrate site.

It belongs to the RuBisCO large chain family. Type I subfamily. As to quaternary structure, heterohexadecamer of 8 large chains and 8 small chains; disulfide-linked. The disulfide link is formed within the large subunit homodimers. Mg(2+) serves as cofactor. The disulfide bond which can form in the large chain dimeric partners within the hexadecamer appears to be associated with oxidative stress and protein turnover.

The protein resides in the plastid. It is found in the chloroplast. The enzyme catalyses 2 (2R)-3-phosphoglycerate + 2 H(+) = D-ribulose 1,5-bisphosphate + CO2 + H2O. It catalyses the reaction D-ribulose 1,5-bisphosphate + O2 = 2-phosphoglycolate + (2R)-3-phosphoglycerate + 2 H(+). RuBisCO catalyzes two reactions: the carboxylation of D-ribulose 1,5-bisphosphate, the primary event in carbon dioxide fixation, as well as the oxidative fragmentation of the pentose substrate in the photorespiration process. Both reactions occur simultaneously and in competition at the same active site. The chain is Ribulose bisphosphate carboxylase large chain (rbcL) from Arthropteris beckleri (Fern).